A 161-amino-acid polypeptide reads, in one-letter code: MKYDTSELCDIYQEDVNVVEPLFSNFGGRSSFGGQIITVKCFEDNGLLYELLEQNGRGRILLVDGGGSVRRALIDADLARLALQNEWEGIVVYGAVRQVDDLEELDLGIQAIAAIPVGAAGEGIGESDVRVNFGGVTFFSGDHLYADNTGIILSEDPLDIE.

Belongs to the RraA family. In terms of assembly, homotrimer. Binds to both RNA-binding sites in the C-terminal region of Rne and to RhlB.

The protein resides in the cytoplasm. Globally modulates RNA abundance by binding to RNase E (Rne) and regulating its endonucleolytic activity. Can modulate Rne action in a substrate-dependent manner by altering the composition of the degradosome. Modulates RNA-binding and helicase activities of the degradosome. The polypeptide is Regulator of ribonuclease activity A (Enterobacter sp. (strain 638)).